Consider the following 304-residue polypeptide: Dihydroorotate dehydrogenase B (NAD(+)), catalytic subunit (304 aa).

Residues S21 and 45–46 (KA) contribute to the FMN site. Substrate is bound by residues K45 and 69–73 (NAIGL). Positions 99 and 127 each coordinate FMN. N127 contributes to the substrate binding site. Catalysis depends on C130, which acts as the Nucleophile. 2 residues coordinate FMN: K165 and I191. 192-193 (NT) lines the substrate pocket. Residues G217, 243-244 (GG), and 265-266 (GT) each bind FMN.

Belongs to the dihydroorotate dehydrogenase family. Type 1 subfamily. In terms of assembly, heterotetramer of 2 PyrK and 2 PyrD type B subunits. The cofactor is FMN.

Its subcellular location is the cytoplasm. It catalyses the reaction (S)-dihydroorotate + NAD(+) = orotate + NADH + H(+). Its pathway is pyrimidine metabolism; UMP biosynthesis via de novo pathway; orotate from (S)-dihydroorotate (NAD(+) route): step 1/1. Functionally, catalyzes the conversion of dihydroorotate to orotate with NAD(+) as electron acceptor. This Shouchella clausii (strain KSM-K16) (Alkalihalobacillus clausii) protein is Dihydroorotate dehydrogenase B (NAD(+)), catalytic subunit (pyrD).